The primary structure comprises 64 residues: Translational regulator CsrA (64 aa).

Belongs to the CsrA/RsmA family. As to quaternary structure, homodimer; the beta-strands of each monomer intercalate to form a hydrophobic core, while the alpha-helices form wings that extend away from the core.

It localises to the cytoplasm. Functionally, a key translational regulator that binds mRNA to regulate translation initiation and/or mRNA stability. Mediates global changes in gene expression, shifting from rapid growth to stress survival by linking envelope stress, the stringent response and the catabolite repression systems. Usually binds in the 5'-UTR; binding at or near the Shine-Dalgarno sequence prevents ribosome-binding, repressing translation, binding elsewhere in the 5'-UTR can activate translation and/or stabilize the mRNA. Its function is antagonized by small RNA(s). The chain is Translational regulator CsrA from Dichelobacter nodosus (strain VCS1703A).